A 92-amino-acid polypeptide reads, in one-letter code: Small ribosomal subunit protein uS19 (92 aa).

It belongs to the universal ribosomal protein uS19 family.

Functionally, protein S19 forms a complex with S13 that binds strongly to the 16S ribosomal RNA. This chain is Small ribosomal subunit protein uS19, found in Paracidovorax citrulli (strain AAC00-1) (Acidovorax citrulli).